The chain runs to 91 residues: Probable Fe(2+)-trafficking protein (91 aa).

The protein belongs to the Fe(2+)-trafficking protein family.

In terms of biological role, could be a mediator in iron transactions between iron acquisition and iron-requiring processes, such as synthesis and/or repair of Fe-S clusters in biosynthetic enzymes. In Burkholderia ambifaria (strain MC40-6), this protein is Probable Fe(2+)-trafficking protein.